The sequence spans 551 residues: Cytochrome c oxidase subunit 1 homolog (551 aa).

A run of 3 helical transmembrane segments spans residues 14-34, 40-60, and 88-108; these read GELG…VVAA, EYAF…FVIG, and VGTL…VIIA. Histidine 132 is a binding site for heme b. 8 consecutive transmembrane segments (helical) span residues 133-153, 169-189, 202-222, 229-249, 280-300, 313-333, 345-365, and 383-403; these read TSAV…FYVV, FVVL…LLGI, ADLW…GTVL, IYVA…LHLG, GHNA…YYFI, LSIV…PHHL, LGMT…INGL, and MMVV…MMSV. Residues histidine 281, histidine 331, and histidine 332 each coordinate Cu cation. Residues histidine 419 and histidine 421 each coordinate heme b. 3 consecutive transmembrane segments (helical) span residues 424-444, 459-479, and 513-533; these read ALGW…PWLW, FWVS…AGIL, and IGGI…FMTI.

The protein belongs to the heme-copper respiratory oxidase family. Requires Cu(2+) as cofactor. Heme b is required as a cofactor.

The protein resides in the cell membrane. The catalysed reaction is 4 Fe(II)-[cytochrome c] + O2 + 8 H(+)(in) = 4 Fe(III)-[cytochrome c] + 2 H2O + 4 H(+)(out). Its pathway is energy metabolism; oxidative phosphorylation. Its function is as follows. Cytochrome c oxidase is the component of the respiratory chain that catalyzes the reduction of oxygen to water. Subunits 1-3 form the functional core of the enzyme complex. Co I is the catalytic subunit of the enzyme. Electrons originating in cytochrome c or a quinol are transferred to the bimetallic center formed by a high-spin heme and copper B. This is Cytochrome c oxidase subunit 1 homolog (fixN) from Azorhizobium caulinodans (strain ATCC 43989 / DSM 5975 / JCM 20966 / LMG 6465 / NBRC 14845 / NCIMB 13405 / ORS 571).